A 108-amino-acid chain; its full sequence is Glutaredoxin-like protein YDR286C homolog (108 aa).

A disulfide bond links cysteine 22 and cysteine 25.

This sequence belongs to the glutaredoxin family. YDR286C subfamily.

The sequence is that of Glutaredoxin-like protein YDR286C homolog from Dictyostelium discoideum (Social amoeba).